A 230-amino-acid chain; its full sequence is MTDDDRIKLEPSWKAALRAEFDQPYMHQLREFLRQEYAAGKEIYPPGPLIFNALNSTPLEQVKVVILGQDPYHGPGQAHGLCFSVQPGVPAPPSLVNIYKELQRDLNLPIPNHGYLQSWAEQGVLLLNTTMTVQRANAASHAKKGWEFFTDRIIQVVSEQCPNVVFLLWGAHAQSKQKLIDGTRHLVLKSVHPSPLSAYRGFFGCGHFSRANGFLQQHGMAPIDWSLPPL.

Asp70 (proton acceptor) is an active-site residue.

The protein belongs to the uracil-DNA glycosylase (UDG) superfamily. UNG family.

Its subcellular location is the cytoplasm. It carries out the reaction Hydrolyzes single-stranded DNA or mismatched double-stranded DNA and polynucleotides, releasing free uracil.. Functionally, excises uracil residues from the DNA which can arise as a result of misincorporation of dUMP residues by DNA polymerase or due to deamination of cytosine. This chain is Uracil-DNA glycosylase, found in Pseudomonas entomophila (strain L48).